A 940-amino-acid chain; its full sequence is MSISPLKCPCLLQRSRGKIEANRQKALARRAEKLLAEQHQKPAQSKQGPSQNLPRDPSKSGSHGIFFKQQNPSSSSHGDQRPQNPHSFSPNTSEQAKGMWQRPEEMPTACPSYRPPNQVTVAGISPPLANSPPGVPSQQLWGCELGQGHPQASLETQSTPFANTTHEPLAKVKNFQETAASSCGQPPRDPELEARMARPSTSGQNISGSVMPRTEGRLQQKAGTPLHRVVGSQQGRCIRNGERFQVKIGYNEALIAVFKSLPSRSYDPATKTWNFSMTDYGPLMKAAQRLPGITLQPLEGAEGHMESPSTSSGIIAKTGLPAAPSLAFVKGQCVLISRARFEADISYSEDLIALFKQMDSRKYDVKTRKWSFLLEEYSKLMERVRGLPQVQLDPLPKTLTLFRAQLQKTSLSPVADIPEADLSRVDSKLVSSLLPFQRAGVNFAIAQRGRLLLADDMGLGKTIQAICIAAYYRKEWPLLVVVPSSVRFTWEQAFCRWLPSLNPLDINVVVTGKDRLTDGLVNIVSFDLLSKLEKQLKPPFKVVIIDESHFLKNIKTARCRAAMPLLKVAKRVILLSGTPAMSRPAELYTQILAVRPTFFPQFHAFGLRYCGAKRQPWGWDYSGSSNLGELKLLLEEAVMLRRLKGDVLSQLPAKQARWWWSPQARSTPGPEPPWMPPPRMTTKDKTKQQQKEALILFFNRTAEAKIPSIIEYILDLLESGREKFLVFAHHKVVLDAITKELERKRVQHIRIDGSTSSADRETSASSFSCPRALRGVLSITAANMGLTFSSADLVVFGELFWNPGVLMQAEDRVHRIGQLSSVSIHYLVARGTADDYLWPLIQEKIKVLGEAGLSETNFSEMTEATDYFSKDSKQQKIYNLFQKSFEEDGNDMELLEAAESFDPGSQDTGDKLDESTLTGSPVKKKRFEFFDNWDSFTSPL.

Positions 1-155 are disordered; the sequence is MSISPLKCPC…GQGHPQASLE (155 aa). S2 bears the N-acetylserine mark. Mediates interaction with RPA2 regions lie at residues 2–36 and 11–36; these read SISP…KLLA and LLQR…KLLA. Residues 17–40 show a composition bias toward basic and acidic residues; that stretch reads GKIEANRQKALARRAEKLLAEQHQ. Residues 18–40 are a coiled coil; it reads KIEANRQKALARRAEKLLAEQHQ. Polar residues-rich tracts occupy residues 41–53 and 68–95; these read KPAQ…SQNL and KQQN…TSEQ. A phosphoserine mark is found at S125, S131, S153, and S200. HARP domains follow at residues 229–299 and 325–396; these read VVGS…QPLE and SLAF…DPLP. The Helicase ATP-binding domain maps to 442–597; it reads NFAIAQRGRL…YTQILAVRPT (156 aa). Position 455 to 462 (455 to 462) interacts with ATP; that stretch reads DDMGLGKT. The DESH box motif lies at 546–549; the sequence is DESH. The Nuclear localization signal signature appears at 641–658; that stretch reads RRLKGDVLSQLPAKQARW. A disordered region spans residues 662–682; it reads PQARSTPGPEPPWMPPPRMTT. The span at 669–679 shows a compositional bias: pro residues; it reads GPEPPWMPPPR. The Helicase C-terminal domain maps to 708–864; that stretch reads SIIEYILDLL…ETNFSEMTEA (157 aa). The segment at 899–918 is disordered; the sequence is ESFDPGSQDTGDKLDESTLT.

This sequence belongs to the SNF2/RAD54 helicase family. SMARCAL1 subfamily. Interacts with RPA2; the interaction is direct and mediates the recruitment by the RPA complex of SMARCAL1 to sites of DNA damage. DNA damage-regulated phosphorylation by kinases that may include ATM, ATR and PRKDC. Expressed in mature oocytes, 2-4 cell stage embryos and 8-16 cell stage embryos. Expressed at lower levels in morulae and blastocysts.

It localises to the nucleus. It carries out the reaction ATP + H2O = ADP + phosphate + H(+). In terms of biological role, ATP-dependent annealing helicase that binds selectively to fork DNA relative to ssDNA or dsDNA and catalyzes the rewinding of the stably unwound DNA. Rewinds single-stranded DNA bubbles that are stably bound by replication protein A (RPA). Acts throughout the genome to reanneal stably unwound DNA, performing the opposite reaction of many enzymes, such as helicases and polymerases, that unwind DNA. May play an important role in DNA damage response by acting at stalled replication forks. This Bos taurus (Bovine) protein is SWI/SNF-related matrix-associated actin-dependent regulator of chromatin subfamily A-like protein 1 (SMARCAL1).